A 369-amino-acid chain; its full sequence is Protein-glutamate methylesterase/protein-glutamine glutaminase (369 aa).

The 117-residue stretch at 6–122 (RAVVADDSHF…SMEMSRLKDQ (117 aa)) folds into the Response regulatory domain. D56 carries the post-translational modification 4-aspartylphosphate. The interval 136 to 178 (GATGSRSGTGSDSGTAPTTAGGSATDRRGTGGSSGQTTYVANP) is disordered. Residues 138-159 (TGSRSGTGSDSGTAPTTAGGSA) are compositionally biased toward low complexity. Residues 173-367 (TYVANPTLVI…DGVIDTITTE (195 aa)) form the CheB-type methylesterase domain. Catalysis depends on residues S185, H212, and D309.

This sequence belongs to the CheB family. In terms of processing, phosphorylated by CheA. Phosphorylation of the N-terminal regulatory domain activates the methylesterase activity.

The protein resides in the cytoplasm. It carries out the reaction [protein]-L-glutamate 5-O-methyl ester + H2O = L-glutamyl-[protein] + methanol + H(+). The catalysed reaction is L-glutaminyl-[protein] + H2O = L-glutamyl-[protein] + NH4(+). Involved in chemotaxis. Part of a chemotaxis signal transduction system that modulates chemotaxis in response to various stimuli. Catalyzes the demethylation of specific methylglutamate residues introduced into the chemoreceptors (methyl-accepting chemotaxis proteins or MCP) by CheR. Also mediates the irreversible deamidation of specific glutamine residues to glutamic acid. This chain is Protein-glutamate methylesterase/protein-glutamine glutaminase, found in Haloarcula marismortui (strain ATCC 43049 / DSM 3752 / JCM 8966 / VKM B-1809) (Halobacterium marismortui).